Reading from the N-terminus, the 146-residue chain is ATP synthase epsilon chain (146 aa).

A disordered region spans residues 103–122 (SAKKRAEQHMQEAKEKHNER).

Belongs to the ATPase epsilon chain family. In terms of assembly, F-type ATPases have 2 components, CF(1) - the catalytic core - and CF(0) - the membrane proton channel. CF(1) has five subunits: alpha(3), beta(3), gamma(1), delta(1), epsilon(1). CF(0) has three main subunits: a, b and c.

It localises to the cell membrane. Produces ATP from ADP in the presence of a proton gradient across the membrane. The sequence is that of ATP synthase epsilon chain from Lactobacillus johnsonii (strain CNCM I-12250 / La1 / NCC 533).